The sequence spans 200 residues: dITP/XTP pyrophosphatase (200 aa).

Substrate is bound at residue Thr-19–Lys-24. Residues Glu-49 and Asp-78 each contribute to the Mg(2+) site. Asp-78 serves as the catalytic Proton acceptor. Substrate-binding positions include Ser-79, Phe-158–Asp-161, Lys-181, and His-186–Arg-187.

Belongs to the HAM1 NTPase family. Homodimer. It depends on Mg(2+) as a cofactor.

The enzyme catalyses XTP + H2O = XMP + diphosphate + H(+). It carries out the reaction dITP + H2O = dIMP + diphosphate + H(+). The catalysed reaction is ITP + H2O = IMP + diphosphate + H(+). In terms of biological role, pyrophosphatase that catalyzes the hydrolysis of nucleoside triphosphates to their monophosphate derivatives, with a high preference for the non-canonical purine nucleotides XTP (xanthosine triphosphate), dITP (deoxyinosine triphosphate) and ITP. Seems to function as a house-cleaning enzyme that removes non-canonical purine nucleotides from the nucleotide pool, thus preventing their incorporation into DNA/RNA and avoiding chromosomal lesions. The sequence is that of dITP/XTP pyrophosphatase from Deinococcus radiodurans (strain ATCC 13939 / DSM 20539 / JCM 16871 / CCUG 27074 / LMG 4051 / NBRC 15346 / NCIMB 9279 / VKM B-1422 / R1).